The chain runs to 526 residues: Glucose-6-phosphate isomerase (526 aa).

Glu-320 functions as the Proton donor in the catalytic mechanism. Catalysis depends on residues His-349 and Lys-453.

It belongs to the GPI family.

It localises to the cytoplasm. It catalyses the reaction alpha-D-glucose 6-phosphate = beta-D-fructose 6-phosphate. The protein operates within carbohydrate biosynthesis; gluconeogenesis. Its pathway is carbohydrate degradation; glycolysis; D-glyceraldehyde 3-phosphate and glycerone phosphate from D-glucose: step 2/4. Its function is as follows. Catalyzes the reversible isomerization of glucose-6-phosphate to fructose-6-phosphate. This is Glucose-6-phosphate isomerase from Rippkaea orientalis (strain PCC 8801 / RF-1) (Cyanothece sp. (strain PCC 8801)).